A 310-amino-acid polypeptide reads, in one-letter code: MGFRHKDIIALKDLTKEEITLLLDTADSLSEINQRDIKKVPTLRGKTVINLFYEASTRTRTSFEIAAKRLSADAVNITASTSSVVKGETLSDTANNLLAMKPDIIVMRHAVSGAHEYLAKRVSCSVINAGDGAHEHPSQGLLDMLTMRQKFGKLDGLKVAIIGDITHSRVARSDIYGLTTMGSHVFLAGPPTMMPVGIERLGNVTVCKDMREAVDKADVVMMLRIQLERQGKTLLPSMREYSRYFGLNPEVLGLAKKNAIVMHPGPINRGVELASSVADCDQSAILTQVENGVAVRMAMLYHVCGGEPVE.

Carbamoyl phosphate is bound by residues R58 and T59. K86 provides a ligand contact to L-aspartate. 3 residues coordinate carbamoyl phosphate: R108, H136, and Q139. L-aspartate is bound by residues R169 and R224. Carbamoyl phosphate contacts are provided by G265 and P266.

This sequence belongs to the aspartate/ornithine carbamoyltransferase superfamily. ATCase family. Heterododecamer (2C3:3R2) of six catalytic PyrB chains organized as two trimers (C3), and six regulatory PyrI chains organized as three dimers (R2).

It catalyses the reaction carbamoyl phosphate + L-aspartate = N-carbamoyl-L-aspartate + phosphate + H(+). It participates in pyrimidine metabolism; UMP biosynthesis via de novo pathway; (S)-dihydroorotate from bicarbonate: step 2/3. In terms of biological role, catalyzes the condensation of carbamoyl phosphate and aspartate to form carbamoyl aspartate and inorganic phosphate, the committed step in the de novo pyrimidine nucleotide biosynthesis pathway. The sequence is that of Aspartate carbamoyltransferase catalytic subunit from Citrifermentans bemidjiense (strain ATCC BAA-1014 / DSM 16622 / JCM 12645 / Bem) (Geobacter bemidjiensis).